Here is a 197-residue protein sequence, read N- to C-terminus: Cerebellin-3 (197 aa).

Residues 1–24 (MGTEWHKPKLSLALVLLTLEAGWA) form the signal peptide. In terms of domain architecture, C1q spans 59–197 (APPGRVAFAA…SFSGFLIFPL (139 aa)). The necessary for interaction with CBLN3, and homotrimerization stretch occupies residues 64–197 (VAFAAVRSHH…SFSGFLIFPL (134 aa)). N-linked (GlcNAc...) asparagine glycosylation is present at Asn-82.

Heterohexamer; disulfide-linked heterotrimers. Interacts with CBLN1. May also form oligomers with CBLN2 and CBLN4. As to expression, expressed in brain, restricted to the cerebellar cortex. Within the cerebellum, expressed in granule layers (at protein level). Also detected in postsynaptic Purkinje cell spines (at protein level).

Its subcellular location is the endoplasmic reticulum. The protein resides in the golgi apparatus. It is found in the cis-Golgi network. The protein localises to the secreted. It localises to the synapse. In terms of biological role, may be involved in synaptic functions in the CNS. This chain is Cerebellin-3 (Cbln3), found in Mus musculus (Mouse).